Reading from the N-terminus, the 92-residue chain is Large ribosomal subunit protein bL31 (92 aa).

The protein belongs to the bacterial ribosomal protein bL31 family. Type A subfamily. In terms of assembly, part of the 50S ribosomal subunit.

Its function is as follows. Binds the 23S rRNA. In Mesoplasma florum (strain ATCC 33453 / NBRC 100688 / NCTC 11704 / L1) (Acholeplasma florum), this protein is Large ribosomal subunit protein bL31.